The following is a 301-amino-acid chain: MANLRDIRKKIGSVKNTQKITHAMKLVSTSKLRKAEEVARNSRAYALKLDAVFDDVLSKMKNQGIEDIQSKYFRELERLEIKKVDIIFITADKGLCGGFNTNTIKKVLACTNEYKEKDIKVRLRGIGKKGNEYFSFNGIEVLDKINNLSSMPNYERVQEFMKKVVEDYLSGKTDKVIIIHNGFKNMITQEIRVKTILPIGYKIIHQNPQPSETQETITSEPSGSEDEILDSLAEKYVEYSLYYALIDSLAAEHSARMQAMDTATNNAKDLVKTLTISYNKARQEAITTELVEINAGVEALK.

The protein belongs to the ATPase gamma chain family. In terms of assembly, F-type ATPases have 2 components, CF(1) - the catalytic core - and CF(0) - the membrane proton channel. CF(1) has five subunits: alpha(3), beta(3), gamma(1), delta(1), epsilon(1). CF(0) has three main subunits: a, b and c.

The protein resides in the cell inner membrane. Its function is as follows. Produces ATP from ADP in the presence of a proton gradient across the membrane. The gamma chain is believed to be important in regulating ATPase activity and the flow of protons through the CF(0) complex. This is ATP synthase gamma chain from Helicobacter pylori (strain ATCC 700392 / 26695) (Campylobacter pylori).